The chain runs to 823 residues: Putative E3 ubiquitin-protein ligase RF4 (823 aa).

Disordered stretches follow at residues 24–72 (TVSP…NGSV), 224–291 (SKLS…CSGS), and 432–464 (ESVT…SEEK). Positions 61 to 72 (KPQNHLSGNGSV) are enriched in polar residues. The span at 224–240 (SKLSDSESLGAESNPPK) shows a compositional bias: low complexity. The segment covering 267-282 (FPNTPNSKKTQSSGTT) has biased composition (polar residues). Positions 453–464 (SEKKSGSESEEK) are enriched in basic and acidic residues. Positions 536 to 738 (ELKALRKERE…ELKLKSDYSR (203 aa)) form a coiled coil. The segment at 768-808 (CVMCLSEEMSVIFLPCAHQVLCFKCNQLHEKEGMMDCPSCR) adopts an RING-type zinc-finger fold.

It belongs to the RING-type zinc finger family.

The catalysed reaction is S-ubiquitinyl-[E2 ubiquitin-conjugating enzyme]-L-cysteine + [acceptor protein]-L-lysine = [E2 ubiquitin-conjugating enzyme]-L-cysteine + N(6)-ubiquitinyl-[acceptor protein]-L-lysine.. Its pathway is protein modification; protein ubiquitination. The sequence is that of Putative E3 ubiquitin-protein ligase RF4 (RF4) from Arabidopsis thaliana (Mouse-ear cress).